Consider the following 201-residue polypeptide: MSRYRGPRFKKIRRLGALPGLTSKRPRSGSDLRNQSRSGKKSQYRIRLEEKQKLRFHYGLTERQLLRYVRIAGKAKGSTGQVLLQLLEMRLDNILFRLGMASTIPGARQLVNHRHILVNGRIVDIPSYRCKPRDIITTRDEQRSRALIQNYLDSPSHEELPKHLTFHPSQYKGLVNQIIDSKWVGLKINELLVVEYYSRQT.

Residues Leu15–Tyr44 are disordered. Residues Met89–Asn150 enclose the S4 RNA-binding domain.

Belongs to the universal ribosomal protein uS4 family. In terms of assembly, part of the 30S ribosomal subunit. Contacts protein S5. The interaction surface between S4 and S5 is involved in control of translational fidelity.

The protein localises to the plastid. It localises to the chloroplast. In terms of biological role, one of the primary rRNA binding proteins, it binds directly to 16S rRNA where it nucleates assembly of the body of the 30S subunit. With S5 and S12 plays an important role in translational accuracy. The polypeptide is Small ribosomal subunit protein uS4c (rps4) (Calycanthus floridus var. glaucus (Eastern sweetshrub)).